The chain runs to 383 residues: Queuine tRNA-ribosyltransferase (383 aa).

D95 (proton acceptor) is an active-site residue. Substrate contacts are provided by residues 95 to 99, D149, Q195, and G222; that span reads DSGGF. Positions 253-259 are RNA binding; sequence GVGSPDS. The active-site Nucleophile is D272. Positions 277 to 281 are RNA binding; important for wobble base 34 recognition; sequence TRIAR. Zn(2+)-binding residues include C310, C312, C315, and H341.

The protein belongs to the queuine tRNA-ribosyltransferase family. Homodimer. Within each dimer, one monomer is responsible for RNA recognition and catalysis, while the other monomer binds to the replacement base PreQ1. It depends on Zn(2+) as a cofactor.

It carries out the reaction 7-aminomethyl-7-carbaguanine + guanosine(34) in tRNA = 7-aminomethyl-7-carbaguanosine(34) in tRNA + guanine. Its pathway is tRNA modification; tRNA-queuosine biosynthesis. Functionally, catalyzes the base-exchange of a guanine (G) residue with the queuine precursor 7-aminomethyl-7-deazaguanine (PreQ1) at position 34 (anticodon wobble position) in tRNAs with GU(N) anticodons (tRNA-Asp, -Asn, -His and -Tyr). Catalysis occurs through a double-displacement mechanism. The nucleophile active site attacks the C1' of nucleotide 34 to detach the guanine base from the RNA, forming a covalent enzyme-RNA intermediate. The proton acceptor active site deprotonates the incoming PreQ1, allowing a nucleophilic attack on the C1' of the ribose to form the product. After dissociation, two additional enzymatic reactions on the tRNA convert PreQ1 to queuine (Q), resulting in the hypermodified nucleoside queuosine (7-(((4,5-cis-dihydroxy-2-cyclopenten-1-yl)amino)methyl)-7-deazaguanosine). The polypeptide is Queuine tRNA-ribosyltransferase (Shouchella clausii (strain KSM-K16) (Alkalihalobacillus clausii)).